A 262-amino-acid chain; its full sequence is Intercellular adhesion molecule 4 (262 aa).

An N-terminal signal peptide occupies residues 1–22; it reads MESALLLPSLLLVAAYPRGGSP. The Extracellular portion of the chain corresponds to 23 to 231; sequence QQEWMQSPPA…LTVLALSPAS (209 aa). 2 Ig-like C2-type domains span residues 54–116 and 138–209; these read GGSA…TREA and GHKY…LNLD. Residues Asn-60, Asn-84, and Asn-182 are each glycosylated (N-linked (GlcNAc...) asparagine). Intrachain disulfides connect Cys-61-Cys-105, Cys-61-Cys-109, Cys-65-Cys-109, and Cys-145-Cys-202. Residues 232–252 traverse the membrane as a helical segment; it reads IALASTSIATLVGILLAVGAV. Topologically, residues 253–262 are cytoplasmic; that stretch reads YVRKYLAVQT.

This sequence belongs to the immunoglobulin superfamily. ICAM family.

It is found in the cell membrane. The protein localises to the secreted. Its function is as follows. Adhesion molecule that binds to leukocyte adhesion LFA-1 protein LFA-1 (integrin alpha-L/beta-2). ICAM4 is also a ligand for alpha-4/beta-1 and alpha-V integrins. Isoform 2 may modulate binding of membrane-associated ICAM4. The protein is Intercellular adhesion molecule 4 (Icam4) of Mus musculus (Mouse).